A 34-amino-acid chain; its full sequence is Potassium channel toxin alpha-KTx 6.2 (34 aa).

Intrachain disulfides connect C3–C24, C9–C29, C13–C19, and C31–C34. C34 is subject to Cysteine amide.

Belongs to the short scorpion toxin superfamily. Potassium channel inhibitor family. Alpha-KTx 06 subfamily. As to expression, expressed by the venom gland.

It is found in the secreted. Blocks voltage-gated potassium channels Kv1.2/KCNA2 (IC(50)=0.12-0.8 nM), KCa3.1/KCNN4 (IC(50)=1-2.2 nM), Shaker B (IC(50)=2.39-80 nM), Kv1.1/KCNA1 (IC(50)=37-45 or no activity, depending on the study), Kv1.3/KCNA3 (IC(50)=150-180 or no activity, depending on the study). In Scorpio palmatus (Israeli golden scorpion), this protein is Potassium channel toxin alpha-KTx 6.2.